The sequence spans 158 residues: Ribosome maturation factor RimP (158 aa).

The protein belongs to the RimP family.

It localises to the cytoplasm. Functionally, required for maturation of 30S ribosomal subunits. The sequence is that of Ribosome maturation factor RimP from Pseudomonas fluorescens (strain SBW25).